A 422-amino-acid polypeptide reads, in one-letter code: Serine hydroxymethyltransferase (422 aa).

Residues Leu-121 and 125 to 127 each bind (6S)-5,6,7,8-tetrahydrofolate; that span reads GHL. Lys-230 carries the N6-(pyridoxal phosphate)lysine modification. 355–357 contacts (6S)-5,6,7,8-tetrahydrofolate; it reads SPF.

Belongs to the SHMT family. As to quaternary structure, homodimer. Pyridoxal 5'-phosphate serves as cofactor.

It is found in the cytoplasm. The enzyme catalyses (6R)-5,10-methylene-5,6,7,8-tetrahydrofolate + glycine + H2O = (6S)-5,6,7,8-tetrahydrofolate + L-serine. Its pathway is one-carbon metabolism; tetrahydrofolate interconversion. It functions in the pathway amino-acid biosynthesis; glycine biosynthesis; glycine from L-serine: step 1/1. Its function is as follows. Catalyzes the reversible interconversion of serine and glycine with tetrahydrofolate (THF) serving as the one-carbon carrier. This reaction serves as the major source of one-carbon groups required for the biosynthesis of purines, thymidylate, methionine, and other important biomolecules. Also exhibits THF-independent aldolase activity toward beta-hydroxyamino acids, producing glycine and aldehydes, via a retro-aldol mechanism. In Teredinibacter turnerae (strain ATCC 39867 / T7901), this protein is Serine hydroxymethyltransferase.